A 123-amino-acid chain; its full sequence is Small ribosomal subunit protein uS12cz/uS12cy (123 aa).

Belongs to the universal ribosomal protein uS12 family. Part of the 30S ribosomal subunit.

Its subcellular location is the plastid. It is found in the chloroplast. In terms of biological role, with S4 and S5 plays an important role in translational accuracy. Located at the interface of the 30S and 50S subunits. In Gossypium hirsutum (Upland cotton), this protein is Small ribosomal subunit protein uS12cz/uS12cy (rps12-A).